A 239-amino-acid polypeptide reads, in one-letter code: Protein TIPIN homolog (239 aa).

Composition is skewed to acidic residues over residues 1 to 14 (MDEM…DELD) and 156 to 166 (DGADDDEDDLF). 2 disordered regions span residues 1–38 (MDEM…RRII) and 135–239 (ESTD…NNDW). Composition is skewed to basic and acidic residues over residues 169–193 (LPEK…EKKN) and 206–223 (YRMM…AREA). Residues 224–239 (EAEDELMEDFDLNNDW) are compositionally biased toward acidic residues.

It belongs to the CSM3 family.

It localises to the cytoplasm. Its subcellular location is the nucleus. Required for normal progression of S-phase. Important for cell survival after DNA damage or replication stress. This Caenorhabditis briggsae protein is Protein TIPIN homolog.